Here is a 211-residue protein sequence, read N- to C-terminus: Arginine exporter protein ArgO (211 aa).

A run of 6 helical transmembrane segments spans residues Met1 to Pro21, Leu37 to Gly57, Leu68 to Leu88, Ile111 to Val131, Trp147 to Ala167, and Ala179 to Ala199.

It belongs to the LysE/ArgO transporter (TC 2.A.75) family.

Its subcellular location is the cell inner membrane. The enzyme catalyses L-arginine(in) = L-arginine(out). In terms of biological role, involved in the export of arginine. Important to control the intracellular level of arginine and the correct balance between arginine and lysine. In Salmonella paratyphi B (strain ATCC BAA-1250 / SPB7), this protein is Arginine exporter protein ArgO.